A 99-amino-acid polypeptide reads, in one-letter code: Ubiquitin-related modifier 1 homolog (99 aa).

Position 99 is a 1-thioglycine (G99). A Glycyl lysine isopeptide (Gly-Lys) (interchain with K-? in acceptor proteins) cross-link involves residue G99.

This sequence belongs to the URM1 family. In terms of assembly, interacts with cer. Post-translationally, C-terminal thiocarboxylation occurs in 2 steps, it is first acyl-adenylated (-COAMP) via the hesA/moeB/thiF part of the MOCS3 homolog, then thiocarboxylated (-COSH) via the rhodanese domain of the MOCS3 homolog.

The protein localises to the cytoplasm. It participates in tRNA modification; 5-methoxycarbonylmethyl-2-thiouridine-tRNA biosynthesis. In terms of biological role, acts as a sulfur carrier required for 2-thiolation of mcm(5)S(2)U at tRNA wobble positions of cytosolic tRNA(Lys), tRNA(Glu) and tRNA(Gln). Serves as sulfur donor in tRNA 2-thiolation reaction by being thiocarboxylated (-COSH) at its C-terminus by MOCS3. The sulfur is then transferred to tRNA to form 2-thiolation of mcm(5)S(2)U. Also acts as a ubiquitin-like protein (UBL) that is covalently conjugated via an isopeptide bond to lysine residues of target proteins such as Prx2/Jafrac1, Ciao1, Eip71CD and GILT1. The thiocarboxylated form serves as substrate for conjugation and oxidative stress specifically induces the formation of UBL-protein conjugates. This chain is Ubiquitin-related modifier 1 homolog, found in Drosophila persimilis (Fruit fly).